Here is a 157-residue protein sequence, read N- to C-terminus: Ribosome-binding factor A (157 aa).

The interval 127–157 (QQQFGSEEASVEDEVLGDDVADDADETEGKD) is disordered. Residues 135-157 (ASVEDEVLGDDVADDADETEGKD) are compositionally biased toward acidic residues.

It belongs to the RbfA family. Monomer. Binds 30S ribosomal subunits, but not 50S ribosomal subunits or 70S ribosomes.

The protein resides in the cytoplasm. Its function is as follows. One of several proteins that assist in the late maturation steps of the functional core of the 30S ribosomal subunit. Associates with free 30S ribosomal subunits (but not with 30S subunits that are part of 70S ribosomes or polysomes). Required for efficient processing of 16S rRNA. May interact with the 5'-terminal helix region of 16S rRNA. This is Ribosome-binding factor A from Shewanella baltica (strain OS195).